A 129-amino-acid chain; its full sequence is Large ribosomal subunit protein bL17 (129 aa).

It belongs to the bacterial ribosomal protein bL17 family. As to quaternary structure, part of the 50S ribosomal subunit. Contacts protein L32.

The protein is Large ribosomal subunit protein bL17 of Desulfotalea psychrophila (strain LSv54 / DSM 12343).